The sequence spans 247 residues: Cell division protein ZapD (247 aa).

It belongs to the ZapD family. As to quaternary structure, interacts with FtsZ.

The protein localises to the cytoplasm. Cell division factor that enhances FtsZ-ring assembly. Directly interacts with FtsZ and promotes bundling of FtsZ protofilaments, with a reduction in FtsZ GTPase activity. This is Cell division protein ZapD from Escherichia coli O139:H28 (strain E24377A / ETEC).